The chain runs to 29 residues: Cliotide T18 (29 aa).

The cyclopeptide (Gly-Asn) cross-link spans glycine 1–asparagine 29. Cystine bridges form between cysteine 5–cysteine 19, cysteine 9–cysteine 21, and cysteine 14–cysteine 26.

Post-translationally, contains 3 disulfide bonds. This is a cyclic peptide. Expressed in root nodules but not in seed.

Functionally, probably participates in a plant defense mechanism. The protein is Cliotide T18 of Clitoria ternatea (Butterfly pea).